The chain runs to 438 residues: GDP-mannose 6-dehydrogenase (438 aa).

NAD(+)-binding residues include tyrosine 10, valine 11, aspartate 30, lysine 35, threonine 86, and threonine 124. Glutamate 161, lysine 210, asparagine 214, histidine 217, asparagine 225, tyrosine 256, tyrosine 257, arginine 259, phenylalanine 262, and glycine 265 together coordinate GDP-alpha-D-mannuronate. Residue cysteine 268 is part of the active site. Lysine 271 serves as a coordination point for NAD(+). A GDP-alpha-D-mannuronate-binding site is contributed by lysine 324. Arginine 331 contributes to the NAD(+) binding site.

Belongs to the UDP-glucose/GDP-mannose dehydrogenase family.

The catalysed reaction is GDP-alpha-D-mannose + 2 NAD(+) + H2O = GDP-alpha-D-mannuronate + 2 NADH + 3 H(+). It functions in the pathway glycan biosynthesis; alginate biosynthesis. Catalyzes the oxidation of guanosine diphospho-D-mannose (GDP-D-mannose) to GDP-D-mannuronic acid, a precursor for alginate polymerization. The alginate layer causes a mucoid phenotype and provides a protective barrier against host immune defenses and antibiotics. In Pseudomonas syringae pv. tomato (strain ATCC BAA-871 / DC3000), this protein is GDP-mannose 6-dehydrogenase (algD).